The following is a 430-amino-acid chain: MAAAASYFSGTALMPSQRSGAPAPEYSAAGTGAAAAPSPSKPRDPRFSGCVPATVLHISRSFAAALAADGGGDPVFSIDGVETTNVRVLGRVVSVVSRDTDVCFTLDDSTGKIPLVRWITDQSDTRDTSYIQEGVYVKVQVNLMGFQAKKQGLARSIRPINNFNEVVLHFIECMHVHLESVQSKMQRQLPPSVQTNEYTHVPSSGGVRDYQVHFTPQVNQGLPPAVQTNTSTYVPLLGGVRDHQAHFAQVNQGQFSPAVQANTSTHLPFSGGVGEHQIHFTPKVNQGQFPPSVQTNTSAHVPYSGGFREHQVHFTPPVNQGQFPPAVQTNLYNHAASSGGVREQVHLTQANQFSAYSSTGGLQHDPQRMVLEALQQPDILALEHGAHVDELVRRTGMPKANIMGVVKHLAAAGFVYWTIDDNHVKSMCNG.

A disordered region spans residues M14–R46. Residues A23–S38 are compositionally biased toward low complexity. The OB DNA-binding region spans V86–I160.

This sequence belongs to the replication factor A protein 2 family. In terms of assembly, heterotrimer of RPA1, RPA2 and RPA3 (canonical replication protein A complex). Interacts with RPA1C and RPA3. Post-translationally, phosphorylated in a cell-cycle-dependent manner (from the S phase until mitosis). In response to DNA damage, recruited to DNA-repair nuclear foci, as a hypophosphorylated form.

The protein localises to the nucleus. Functionally, component of the replication protein A complex (RPA) required for DNA recombination, repair and replication. The activity of RPA is mediated by single-stranded DNA binding and protein interactions. The polypeptide is Replication protein A 32 kDa subunit C (RPA2C) (Oryza sativa subsp. japonica (Rice)).